The primary structure comprises 113 residues: Hydrogenase maturation factor HybF (113 aa).

Ni(2+) is bound by residues H2 and E3. Residues C73, C76, C89, and C92 each contribute to the Zn(2+) site.

This sequence belongs to the HypA/HybF family. HybF subfamily.

Functionally, involved in the maturation of [NiFe] hydrogenases. Required for nickel insertion into the metal center of the hydrogenase. The protein is Hydrogenase maturation factor HybF of Escherichia coli O157:H7.